The sequence spans 236 residues: Rho-related GTP-binding protein RhoV (236 aa).

The interval 1-28 is disordered; the sequence is MPPRELSEAEPPPLPASTPPPRRRSAPP. Positions 10 to 20 are enriched in pro residues; it reads EPPPLPASTPP. Phosphoserine is present on S25. GTP contacts are provided by residues 38-45, 85-89, and 143-146; these read GDGAVGKS, DTAGQ, and TQAD. C234 carries S-palmitoyl cysteine lipidation.

Belongs to the small GTPase superfamily. Rho family. Interacts with PAK2. It depends on Mg(2+) as a cofactor. Highly expressed in brain and testis and at lower levels in spleen and lung.

Its subcellular location is the cell membrane. It localises to the endosome membrane. Functionally, plays a role in the control of the actin cytoskeleton via activation of the JNK pathway. In Rattus norvegicus (Rat), this protein is Rho-related GTP-binding protein RhoV.